We begin with the raw amino-acid sequence, 335 residues long: Nucleoid-associated protein PSEEN4449 (335 aa).

This sequence belongs to the YejK family.

The protein localises to the cytoplasm. The protein resides in the nucleoid. This is Nucleoid-associated protein PSEEN4449 from Pseudomonas entomophila (strain L48).